We begin with the raw amino-acid sequence, 277 residues long: Tryptophan synthase alpha chain (277 aa).

Residues Glu-50 and Asp-61 each act as proton acceptor in the active site.

This sequence belongs to the TrpA family. In terms of assembly, tetramer of two alpha and two beta chains.

It catalyses the reaction (1S,2R)-1-C-(indol-3-yl)glycerol 3-phosphate + L-serine = D-glyceraldehyde 3-phosphate + L-tryptophan + H2O. It functions in the pathway amino-acid biosynthesis; L-tryptophan biosynthesis; L-tryptophan from chorismate: step 5/5. Its function is as follows. The alpha subunit is responsible for the aldol cleavage of indoleglycerol phosphate to indole and glyceraldehyde 3-phosphate. The polypeptide is Tryptophan synthase alpha chain (Beijerinckia indica subsp. indica (strain ATCC 9039 / DSM 1715 / NCIMB 8712)).